We begin with the raw amino-acid sequence, 526 residues long: Peptide chain release factor 3 (526 aa).

One can recognise a tr-type G domain in the interval 8 to 277 (NKRRTFAIIS…GLTQWAPAPQ (270 aa)). GTP contacts are provided by residues 17–24 (SHPDAGKT), 85–89 (DTPGH), and 139–142 (NKLD).

Belongs to the TRAFAC class translation factor GTPase superfamily. Classic translation factor GTPase family. PrfC subfamily.

Its subcellular location is the cytoplasm. In terms of biological role, increases the formation of ribosomal termination complexes and stimulates activities of RF-1 and RF-2. It binds guanine nucleotides and has strong preference for UGA stop codons. It may interact directly with the ribosome. The stimulation of RF-1 and RF-2 is significantly reduced by GTP and GDP, but not by GMP. The sequence is that of Peptide chain release factor 3 from Histophilus somni (strain 2336) (Haemophilus somnus).